The following is a 250-amino-acid chain: NADH-quinone oxidoreductase subunit C (250 aa).

2 disordered regions span residues 1-33 (MSDD…PTGE) and 228-250 (LGGV…RSYN).

It belongs to the complex I 30 kDa subunit family. In terms of assembly, NDH-1 is composed of 14 different subunits. Subunits NuoB, C, D, E, F, and G constitute the peripheral sector of the complex.

It localises to the cell membrane. The enzyme catalyses a quinone + NADH + 5 H(+)(in) = a quinol + NAD(+) + 4 H(+)(out). Functionally, NDH-1 shuttles electrons from NADH, via FMN and iron-sulfur (Fe-S) centers, to quinones in the respiratory chain. The immediate electron acceptor for the enzyme in this species is believed to be a menaquinone. Couples the redox reaction to proton translocation (for every two electrons transferred, four hydrogen ions are translocated across the cytoplasmic membrane), and thus conserves the redox energy in a proton gradient. This Nocardioides sp. (strain ATCC BAA-499 / JS614) protein is NADH-quinone oxidoreductase subunit C.